A 401-amino-acid polypeptide reads, in one-letter code: SVP1-like protein 2 (401 aa).

WD repeat units lie at residues 222-262 (AHKN…LIHE) and 267-306 (LDRALIYDMQWNGKGDKLAVVSDKFTLHIFQINEDLDKRH).

Belongs to the WD repeat PROPPIN family.

The protein localises to the vacuole membrane. It is found in the cytoplasmic vesicle membrane. Its function is as follows. Involved in mitochondrial or peroxisomal functions and amino acid signaling pathways. The polypeptide is SVP1-like protein 2 (HSV2) (Eremothecium gossypii (strain ATCC 10895 / CBS 109.51 / FGSC 9923 / NRRL Y-1056) (Yeast)).